The chain runs to 287 residues: MQHPHRCPECDGTIRETDTEHVCADCGLVVTDAPIDHGPEWRTFSDDPDHAPERTGAPLTRSRHDRGLSTEIGYSARLTGRKRRKFARLRRQHKRATIPSKADYNRIYGFTEIRRLIGTFGIGTGLRDQACTLFASAQTAGLLHGRTIEGFAAAGVYATCRTNGVTRTLDEIAAAARATRPELTTAYDAMNRDLGLPTGPIDPREYLPRYADALSLPARIERQARELVAALETDGLVAGRNPSGVAAGCLYTAATETDHAVTQSAAAAVADVTPVTLRATYQNLTDA.

The segment at 3-31 (HPHRCPECDGTIRETDTEHVCADCGLVVT) adopts a TFIIB-type zinc-finger fold. Residues cysteine 7, cysteine 10, cysteine 23, and cysteine 26 each contribute to the Zn(2+) site. Positions 40–53 (EWRTFSDDPDHAPE) are enriched in basic and acidic residues. Residues 40–63 (EWRTFSDDPDHAPERTGAPLTRSR) form a disordered region. A run of 2 repeats spans residues 111 to 194 (TEIR…NRDL) and 205 to 286 (EYLP…NLTD).

It belongs to the TFIIB family.

Its function is as follows. Stabilizes TBP binding to an archaeal box-A promoter. Also responsible for recruiting RNA polymerase II to the pre-initiation complex (DNA-TBP-TFIIB). The polypeptide is Transcription initiation factor IIB 1 (Halobacterium salinarum (strain ATCC 700922 / JCM 11081 / NRC-1) (Halobacterium halobium)).